The chain runs to 128 residues: Deoxycytidylate deaminase (128 aa).

Residues 5–128 form the CMP/dCMP-type deaminase domain; sequence DWDEYFLGIA…IERVVYPKES (124 aa). His-81 lines the Zn(2+) pocket. The active-site Proton donor is the Glu-83. The Zn(2+) site is built by Cys-107 and Cys-110.

This sequence belongs to the cytidine and deoxycytidylate deaminase family.

The enzyme catalyses dCMP + H2O + H(+) = dUMP + NH4(+). The sequence is that of Deoxycytidylate deaminase (36.1) from Mycobacterium (Mycobacteriophage D29).